A 319-amino-acid polypeptide reads, in one-letter code: Aspartate carbamoyltransferase catalytic subunit (319 aa).

The carbamoyl phosphate site is built by arginine 54 and threonine 55. Residue lysine 82 participates in L-aspartate binding. 3 residues coordinate carbamoyl phosphate: arginine 104, histidine 134, and glutamine 137. Residues arginine 171 and arginine 227 each contribute to the L-aspartate site. The carbamoyl phosphate site is built by glycine 271 and proline 272.

Belongs to the aspartate/ornithine carbamoyltransferase superfamily. ATCase family. In terms of assembly, heterododecamer (2C3:3R2) of six catalytic PyrB chains organized as two trimers (C3), and six regulatory PyrI chains organized as three dimers (R2).

The catalysed reaction is carbamoyl phosphate + L-aspartate = N-carbamoyl-L-aspartate + phosphate + H(+). The protein operates within pyrimidine metabolism; UMP biosynthesis via de novo pathway; (S)-dihydroorotate from bicarbonate: step 2/3. In terms of biological role, catalyzes the condensation of carbamoyl phosphate and aspartate to form carbamoyl aspartate and inorganic phosphate, the committed step in the de novo pyrimidine nucleotide biosynthesis pathway. The protein is Aspartate carbamoyltransferase catalytic subunit of Kineococcus radiotolerans (strain ATCC BAA-149 / DSM 14245 / SRS30216).